We begin with the raw amino-acid sequence, 258 residues long: Imidazole glycerol phosphate synthase subunit HisF (258 aa).

Residues Asp-11 and Asp-130 contribute to the active site.

It belongs to the HisA/HisF family. Heterodimer of HisH and HisF.

Its subcellular location is the cytoplasm. It catalyses the reaction 5-[(5-phospho-1-deoxy-D-ribulos-1-ylimino)methylamino]-1-(5-phospho-beta-D-ribosyl)imidazole-4-carboxamide + L-glutamine = D-erythro-1-(imidazol-4-yl)glycerol 3-phosphate + 5-amino-1-(5-phospho-beta-D-ribosyl)imidazole-4-carboxamide + L-glutamate + H(+). It functions in the pathway amino-acid biosynthesis; L-histidine biosynthesis; L-histidine from 5-phospho-alpha-D-ribose 1-diphosphate: step 5/9. In terms of biological role, IGPS catalyzes the conversion of PRFAR and glutamine to IGP, AICAR and glutamate. The HisF subunit catalyzes the cyclization activity that produces IGP and AICAR from PRFAR using the ammonia provided by the HisH subunit. This Rhodopseudomonas palustris (strain BisB18) protein is Imidazole glycerol phosphate synthase subunit HisF.